The primary structure comprises 423 residues: Peroxisome biogenesis factor 2 (423 aa).

The segment covering 1–26 (MVDNYNNNNILPTNTSTTTTTNTTIT) has biased composition (low complexity). Residues 1-46 (MVDNYNNNNILPTNTSTTTTTNTTITPTPPLPPPPPISNILDNNNN) form a disordered region. Over 1–109 (MVDNYNNNNI…NIKRPSTSIV (109 aa)) the chain is Peroxisomal matrix. Pro residues predominate over residues 27-37 (PTPPLPPPPPI). A helical transmembrane segment spans residues 110–136 (RVSQLDSARLDEEILDLLRSQFMKIFT). The Cytoplasmic portion of the chain corresponds to 137-142 (FFKPNF). The helical transmembrane segment at 143-168 (IHNFQPEINLVLKSVIYKLSIFNLGT) threads the bilayer. Over 169–197 (TYGNQLQNLTYRNEKAFDPIRGSDQLNKL) the chain is Peroxisomal matrix. A helical membrane pass occupies residues 198 to 224 (TMRQKWLSGLINIGGEWLWTRINRYLI). Over 225 to 234 (NNNWSEHPPN) the chain is Cytoplasmic. Residues 235–265 (DIRKKFWNFLNFAESAYKALALLNFLTFLFN) traverse the membrane as a helical segment. At 266–292 (GKYVTLVNRILHMRLVYAHPTLSRNIS) the chain is on the peroxisomal matrix side. A helical transmembrane segment spans residues 293–316 (FEYMNRLLVWHGFTEFILFIMPLI). The Cytoplasmic segment spans residues 317-423 (NIDRIKSFLY…SNIKRFSIQD (107 aa)). Cys-369, Cys-372, Cys-385, His-387, Cys-390, Cys-393, Cys-406, and Cys-409 together coordinate Zn(2+). The RING-type zinc-finger motif lies at 369–410 (CPICMNDPISMPYSADCGHLFCYYCIKTSCMIDSSFTCPRCN).

Belongs to the pex2/pex10/pex12 family. Component of the PEX2-PEX10-PEX12 retrotranslocation channel.

Its subcellular location is the peroxisome membrane. It catalyses the reaction [E2 ubiquitin-conjugating enzyme]-S-ubiquitinyl-L-cysteine + [acceptor protein]-L-cysteine = [E2 ubiquitin-conjugating enzyme]-L-cysteine + [acceptor protein]-S-ubiquitinyl-L-cysteine.. The protein operates within protein modification; protein ubiquitination. Its function is as follows. E3 ubiquitin-protein ligase component of a retrotranslocation channel required for peroxisome organization by mediating export of the PEX5 receptor from peroxisomes to the cytosol, thereby promoting PEX5 recycling. The retrotranslocation channel is composed of PEX2, PEX10 and PEX12; each subunit contributing transmembrane segments that coassemble into an open channel that specifically allows the passage of PEX5 through the peroxisomal membrane. PEX2 also regulates peroxisome organization by acting as a E3 ubiquitin-protein ligase. PEX2 ubiquitinates PEX5 during its passage through the retrotranslocation channel: catalyzes monoubiquitination of PEX5 at 'Cys-11', a modification that acts as a signal for PEX5 extraction into the cytosol. In Dictyostelium discoideum (Social amoeba), this protein is Peroxisome biogenesis factor 2 (pex2).